The primary structure comprises 1182 residues: NACHT, LRR and PYD domains-containing protein 1a (1182 aa).

Residues 1 to 23 (MEESQSKQESSTKVAQHEGQEDV) are disordered. Residues 133-442 (QLVIIEGAAG…EFFAAMSYIL (310 aa)) form the NACHT domain. An ATP-binding site is contributed by 139–146 (GAAGIGKS). LRR repeat units lie at residues 634 to 655 (NLEE…SLCT), 691 to 711 (SLTE…KMLC), and 720 to 743 (NLSI…RTLE). The tract at residues 780–806 (QQRQQSGDKHMEPLGTEDEFWGPTGPV) is disordered. The segment at 799–932 (FWGPTGPVTT…HYAVLENPSF (134 aa)) is ZU5. One can recognise an FIIND domain in the interval 799 to 1082 (FWGPTGPVTT…LRPALPKIAT (284 aa)). A UPA region spans residues 933-1082 (SPMGILLRMI…LRPALPKIAT (150 aa)). Residues 1092–1175 (HFMDQHREQL…HLVMDILEKL (84 aa)) enclose the CARD domain.

It belongs to the NLRP family. As to quaternary structure, interacts (via LRR repeats) with BCL2 and BCL2L1 (via the loop between motifs BH4 and BH3). Interacts with NOD2; this interaction is enhanced in the presence of muramyl dipeptide (MDP) and increases IL1B release. Interacts with EIF2AK2/PKR; this interaction requires EIF2AK2 activity, is accompanied by EIF2AK2 autophosphorylation and promotes inflammasome assembly in response to danger-associated signals. Interacts with MEFV; this interaction targets Nlrp1a to degradation by autophagy, hence preventing excessive IL1B- and IL18-mediated inflammation. Interacts with DPP9; leading to inhibit activation of the inflammasome. DPP9 acts via formation of a ternary complex, composed of a DPP9 homodimer, one full-length Nlrp1a protein, and one cleaved C-terminus of Nlrp1a (NACHT, LRR and PYD domains-containing protein 1a, C-terminus). Interacts with DPP8; leading to inhibit activation of the inflammasome, probably via formation of a ternary complex with DPP8. Interacts with the C-terminal part of Nlrp1a (NACHT, LRR and PYD domains-containing protein 1a, C-terminus) in absence of pathogens and other damage-associated signals. In terms of assembly, interacts with the N-terminal part of Nlrp1a (NACHT, LRR and PYD domains-containing protein 1a, N-terminus) in absence of pathogens and other damage-associated signals. Homomultimer; forms the Nlrp1a inflammasome polymeric complex, a filament composed of homopolymers of this form in response to pathogens and other damage-associated signals. Interacts (via CARD domain) with CASP1 (via CARD domain); leading to CASP1 activation. In terms of processing, autocatalytically cleaved. Autocatalytic cleavage in FIIND region occurs constitutively, prior to activation signals, and is required for inflammasome activity (IL1B release), possibly by facilitating CASP1 binding. Both N- and C-terminal parts remain associated non-covalently. Post-translationally, ubiquitinated in response to pathogen-associated signals, leading to its degradation by the proteasome and subsequent release of the cleaved C-terminal part of the protein (NACHT, LRR and PYD domains-containing protein 1a, C-terminus), which polymerizes and forms the Nlrp1a inflammasome. Highly expressed in hematopoietic stem cells and progenitor cells of both myeloid and lymphoid origin. The expression is highly strain-dependent. Not expressed in Balb/cJ animals, but widely expressed in C57BL/6J. Expressed in macrophages resistant to Bacillus anthracis lethal toxin, but not in toxin-sensitive macrophages, except in CAST/EiJ strain.

Its subcellular location is the cytoplasm. It localises to the cytosol. The protein localises to the nucleus. The protein resides in the inflammasome. Its activity is regulated as follows. Nlrp1a inflammasome is activated by pathogens and other damage-associated signals: activation promotes ubiquitination and degradation of the N-terminal part, releasing the cleaved C-terminal part of the protein (NACHT, LRR and PYD domains-containing protein 1a, C-terminus), which polymerizes and forms the Nlrp1a inflammasome. Nlrp1a inflammasome is inhibited by DPP8 and DPP9, which sequester the C-terminal fragment of Nlrp1a (NACHT, LRR and PYD domains-containing protein 1a, C-terminus) in a ternary complex, thereby preventing Nlrp1a oligomerization and activation. Nlrp1a inflammasome is activated by Val-boroPro (Talabostat, PT-100), an inhibitor of dipeptidyl peptidases DPP8 and DPP9. Val-boroPro relieves inhibition of DPP8 and/or DPP9 by promoting disruption of the ternary complex, releasing its C-terminal part from autoinhibition. Its function is as follows. Acts as the sensor component of the Nlrp1a inflammasome, which mediates inflammasome activation in response to various pathogen-associated signals, leading to subsequent pyroptosis. Inflammasomes are supramolecular complexes that assemble in the cytosol in response to pathogens and other damage-associated signals and play critical roles in innate immunity and inflammation. Acts as a recognition receptor (PRR): recognizes specific pathogens and other damage-associated signals, and mediates the formation of the inflammasome polymeric complex. In response to pathogen-associated signals, the N-terminal part of Nlrp1a is degraded by the proteasome, releasing the cleaved C-terminal part of the protein (NACHT, LRR and PYD domains-containing protein 1a, C-terminus), which polymerizes to initiate the formation of the inflammasome complex: the inflammasome recruits pro-caspase-1 (proCASP1) and promotes caspase-1 (CASP1) activation, which subsequently cleaves and activates inflammatory cytokines IL1B and IL18 and gasdermin-D (GSDMD), leading to pyroptosis. In the absence of GSDMD expression, the Nlrp1a inflammasome is able to recruit and activate CASP8, leading to activation of gasdermin-E (GSDME). Activation of Nlrp1a inflammasome is also required for HMGB1 secretion; the active cytokines and HMGB1 stimulate inflammatory responses. When activated in the bone marrow, induces the pyroptosis of hematopoietic stem cells and progenitor cells of both myeloid and lymphoid lineages, hence allowing the removal of damaged cells, and the release of IL1B, which induces granulopoiesis. In terms of biological role, constitutes the precursor of the Nlrp1a inflammasome, which mediates autoproteolytic processing within the FIIND domain to generate the N-terminal and C-terminal parts, which are associated non-covalently in absence of pathogens and other damage-associated signals. Regulatory part that prevents formation of the Nlrp1a inflammasome: in absence of pathogens and other damage-associated signals, interacts with the C-terminal part of Nlrp1a (NACHT, LRR and PYD domains-containing protein 1a, C-terminus), preventing activation of the Nlrp1a inflammasome. In response to pathogen-associated signals, this part is ubiquitinated and degraded by the proteasome, releasing the cleaved C-terminal part of the protein, which polymerizes and forms the Nlrp1a inflammasome. Functionally, constitutes the active part of the Nlrp1a inflammasome. In absence of pathogens and other damage-associated signals, interacts with the N-terminal part of Nlrp1a (NACHT, LRR and PYD domains-containing protein 1a, N-terminus), preventing activation of the Nlrp1a inflammasome. In response to pathogen-associated signals, the N-terminal part of Nlrp1a is degraded by the proteasome, releasing this form, which polymerizes to form the Nlrp1a inflammasome complex: the Nlrp1a inflammasome complex then directly recruits pro-caspase-1 (proCASP1) and promotes caspase-1 (CASP1) activation, leading to gasdermin-D (GSDMD) cleavage and subsequent pyroptosis. The sequence is that of NACHT, LRR and PYD domains-containing protein 1a from Mus musculus (Mouse).